An 81-amino-acid polypeptide reads, in one-letter code: uncharacterized protein (81 aa).

Residues 46–81 (ASSPVVKRKSLVKRKSPVKRSPLKKRSQMRTSPCEA) form a disordered region. Basic residues predominate over residues 51–73 (VKRKSLVKRKSPVKRSPLKKRSQ).

This is an uncharacterized protein from Frog virus 3 (isolate Goorha) (FV-3).